The chain runs to 230 residues: Orotidine 5'-phosphate decarboxylase (230 aa).

Substrate contacts are provided by residues D10, K31, 58–67 (DLKLHDIPNT), T117, R179, Q188, G208, and R209. The active-site Proton donor is the K60.

It belongs to the OMP decarboxylase family. Type 1 subfamily. Homodimer.

The enzyme catalyses orotidine 5'-phosphate + H(+) = UMP + CO2. Its pathway is pyrimidine metabolism; UMP biosynthesis via de novo pathway; UMP from orotate: step 2/2. Catalyzes the decarboxylation of orotidine 5'-monophosphate (OMP) to uridine 5'-monophosphate (UMP). The sequence is that of Orotidine 5'-phosphate decarboxylase from Staphylococcus epidermidis (strain ATCC 35984 / DSM 28319 / BCRC 17069 / CCUG 31568 / BM 3577 / RP62A).